The chain runs to 455 residues: Serine incorporator 2 (455 aa).

The next 11 membrane-spanning stretches (helical) occupy residues 5-27 (LGACSLLSCASCLCGSAPCILCS), 40-57 (LIFTFFLFLGVLVSIIML), 96-118 (AVYRMCFATAAFFFFFTLLMLCV), 131-150 (GFWFFKFLILVGLTVGAFYI), 160-182 (FYFGVVGSFLFILIQLVLLIDFA), 202-224 (YAGLFFFTLLFYLLSIAAVALMF), 239-256 (FISLNLTFCVCVSIAAVL), 268-290 (LLQASVITLYTMFVTWSALSSIP), 317-339 (QWWDAPSIVGLIIFLLCTLFISL), 385-407 (TYSYSFFHFCLVLASLHVMMTLT), and 422-444 (WTAVWVKICASWAGLLLYLWTLV).

The protein belongs to the TDE1 family.

The protein resides in the cell membrane. The enzyme catalyses a 1,2-diacyl-sn-glycero-3-phospho-L-serine(in) = a 1,2-diacyl-sn-glycero-3-phospho-L-serine(out). It carries out the reaction a 1,2-diacyl-sn-glycero-3-phosphocholine(in) = a 1,2-diacyl-sn-glycero-3-phosphocholine(out). It catalyses the reaction a 1,2-diacyl-sn-glycero-3-phosphoethanolamine(in) = a 1,2-diacyl-sn-glycero-3-phosphoethanolamine(out). In terms of biological role, non-ATP-dependent, non-specific lipid transporter for phosphatidylserine, phosphatidylcholine, and phosphatidylethanolamine. Functions as a scramblase that flips lipids in both directions across the membrane. In contrast to SERINC3 and SERINC5, has no effect on HIV-1 particles infectivity. The protein is Serine incorporator 2 of Homo sapiens (Human).